A 512-amino-acid polypeptide reads, in one-letter code: Protein arginine N-methyltransferase 2 (512 aa).

Residues 67 to 103 are disordered; that stretch reads TSNIDDLPLPPPIQEVEEEEPTQQNIEQQQQTQDESD. Positions 88-99 are enriched in low complexity; the sequence is TQQNIEQQQQTQ. One can recognise an SAM-dependent MTase PRMT-type domain in the interval 120–508; the sequence is DEEYFSSYSK…KTNPFDYSYQ (389 aa). Residues H133, R142, G166, and E217 each coordinate S-adenosyl-L-methionine. Active-site residues include E231 and E240. The segment at 375-395 is disordered; that stretch reads DDDDNDNNNNNNDNSNDDENK.

Belongs to the class I-like SAM-binding methyltransferase superfamily. Protein arginine N-methyltransferase family.

The protein localises to the cytoplasm. It localises to the nucleus. The enzyme catalyses L-arginyl-[protein] + 2 S-adenosyl-L-methionine = N(omega),N(omega)-dimethyl-L-arginyl-[protein] + 2 S-adenosyl-L-homocysteine + 2 H(+). Its function is as follows. Arginine methyltransferase that methylates the guanidino nitrogens of arginyl residues in some proteins such as histones. In Dictyostelium discoideum (Social amoeba), this protein is Protein arginine N-methyltransferase 2 (prmt2).